We begin with the raw amino-acid sequence, 1337 residues long: Receptor-type tyrosine-protein phosphatase eta (1337 aa).

The first 35 residues, 1–35, serve as a signal peptide directing secretion; it reads MKPAAREARLPPRSPGLRWALPLLLLLLRLGQILC. Topologically, residues 36–975 are extracellular; sequence AGGTPSPIPD…LPQDPGVICG (940 aa). 2 stretches are compositionally biased toward polar residues: residues 67–82 and 89–119; these read SFHK…VETN and SSGA…STGP. The interval 67 to 124 is disordered; that stretch reads SFHKQNGTGTPQVETNTSEDGESSGANDSLRTPEQGSNGTDGASQKTPSSTGPSPVFD. Residues asparagine 72, asparagine 82, asparagine 93, asparagine 104, asparagine 142, asparagine 172, asparagine 192, asparagine 231, asparagine 258, asparagine 278, asparagine 342, asparagine 351, asparagine 376, asparagine 391, asparagine 396, asparagine 413, asparagine 431, asparagine 501, asparagine 525, asparagine 536, asparagine 582, asparagine 603, asparagine 618, asparagine 628, asparagine 637, asparagine 666, asparagine 669, asparagine 761, asparagine 772, asparagine 784, asparagine 790, asparagine 824, asparagine 910, and asparagine 937 are each glycosylated (N-linked (GlcNAc...) asparagine). Fibronectin type-III domains follow at residues 121–209, 207–291, 271–364, 368–456, 457–541, 542–623, 625–720, 721–817, and 816–902; these read PVFD…EPIP, PIPV…EGGL, NPYL…EFRT, QVFD…PPVP, VSDF…TVPS, AVFD…TAQY, RPSN…TDPA, SMAS…TDPP, and PPPP…SEVL. Positions 278–327 are disordered; the sequence is NKTKGDPLGTEGGLDASNTERSRAGSPTAPVHDESLVGPVDPSSGQQSRD. Residues 976-996 form a helical membrane-spanning segment; the sequence is AVFGCIFGALVIVTVGGFIFW. Topologically, residues 997–1337 are cytoplasmic; that stretch reads RKKRKDAKNN…TFGKTNGYIA (341 aa). Serine 1009 carries the phosphoserine modification. Residues 1041–1298 form the Tyrosine-protein phosphatase domain; sequence FAEEYEDLKL…VFLNQCVLDI (258 aa). Substrate is bound by residues aspartate 1205, 1239-1245, and glutamine 1283; that span reads CSAGVGR. Catalysis depends on cysteine 1239, which acts as the Phosphocysteine intermediate.

The protein belongs to the protein-tyrosine phosphatase family. Receptor class 3 subfamily. In terms of assembly, monomer. Interacts with CTNNB1 (phosphorylated) and JUP (phosphorylated). Interacts with FLT3 (phosphorylated). Interacts with GAB1 and GRB2. Post-translationally, N- and O-glycosylated. N-glycosylated. In terms of tissue distribution, expressed in the promyelocytic cell line HL-60, the granulocyte-macrophage colony-stimulating factor-dependent leukemic cell line F-36P, and the IL3 and erythropoietin-dependent leukemic cell line F-36E. Expressed predominantly in epithelial cells and lymphocytes. Enhanced expression at high cell density. Expressed in the brain.

The protein localises to the cell membrane. Its subcellular location is the cell projection. The protein resides in the ruffle membrane. It localises to the cell junction. It is found in the secreted. The protein localises to the extracellular space. It carries out the reaction O-phospho-L-tyrosyl-[protein] + H2O = L-tyrosyl-[protein] + phosphate. Its function is as follows. Tyrosine phosphatase which dephosphorylates or contributes to the dephosphorylation of CTNND1, FLT3, PDGFRB, MET, KDR, LYN, SRC, MAPK1, MAPK3, EGFR, TJP1, OCLN, PIK3R1 and PIK3R2. Plays a role in cell adhesion, migration, proliferation and differentiation. Has a role in megakaryocytes and platelet formation. Involved in vascular development. Regulator of macrophage adhesion and spreading. Positively affects cell-matrix adhesion. Positive regulator of platelet activation and thrombosis. Negative regulator of cell proliferation. Negative regulator of PDGF-stimulated cell migration; through dephosphorylation of PDGFR. Positive regulator of endothelial cell survival, as well as of VEGF-induced SRC and AKT activation; through KDR dephosphorylation. Negative regulator of EGFR signaling pathway; through EGFR dephosphorylation. Enhances the barrier function of epithelial junctions during reassembly. Negatively regulates T-cell receptor (TCR) signaling. Upon T-cell TCR activation, it is up-regulated and excluded from the immunological synapses, while upon T-cell-antigen presenting cells (APC) disengagement, it is no longer excluded and can dephosphorylate PLCG1 and LAT to down-regulate prolongation of signaling. Functionally, activates angiogenesis and cell migration. Downregulates the expression of the endothelial adhesion molecules ICAM1 and VCAM1. This Homo sapiens (Human) protein is Receptor-type tyrosine-protein phosphatase eta (PTPRJ).